The sequence spans 598 residues: Elongation factor 4 (598 aa).

Positions 4–186 constitute a tr-type G domain; the sequence is SHIRNFSIIA…VIVNKIPPPE (183 aa). GTP contacts are provided by residues 16 to 21 and 133 to 136; these read DHGKST and NKID.

It belongs to the TRAFAC class translation factor GTPase superfamily. Classic translation factor GTPase family. LepA subfamily.

It localises to the cell inner membrane. The catalysed reaction is GTP + H2O = GDP + phosphate + H(+). Its function is as follows. Required for accurate and efficient protein synthesis under certain stress conditions. May act as a fidelity factor of the translation reaction, by catalyzing a one-codon backward translocation of tRNAs on improperly translocated ribosomes. Back-translocation proceeds from a post-translocation (POST) complex to a pre-translocation (PRE) complex, thus giving elongation factor G a second chance to translocate the tRNAs correctly. Binds to ribosomes in a GTP-dependent manner. In Alteromonas mediterranea (strain DSM 17117 / CIP 110805 / LMG 28347 / Deep ecotype), this protein is Elongation factor 4.